The chain runs to 1199 residues: Pyruvate-flavodoxin oxidoreductase (1199 aa).

4Fe-4S ferredoxin-type domains lie at 699 to 728 (EIPV…AKVY) and 755 to 784 (FTIQ…EPSL). Residues Cys-708, Cys-711, Cys-714, Cys-718, Cys-764, Cys-767, Cys-770, Cys-774, Cys-838, Cys-841, Cys-866, and Cys-1103 each coordinate [4Fe-4S] cluster.

The protein belongs to the pyruvate:ferredoxin/flavodoxin oxidoreductase family. The cofactor is [4Fe-4S] cluster.

It catalyses the reaction oxidized [flavodoxin] + pyruvate + CoA + 2 H(+) = reduced [flavodoxin] + acetyl-CoA + CO2. Oxidoreductase required for the transfer of electrons from pyruvate to flavodoxin, which reduces nitrogenase. The chain is Pyruvate-flavodoxin oxidoreductase (nifJ) from Nostoc sp. (strain PCC 7120 / SAG 25.82 / UTEX 2576).